Here is a 357-residue protein sequence, read N- to C-terminus: Peptide chain release factor 1 (357 aa).

Gln-234 carries the post-translational modification N5-methylglutamine. The tract at residues Ser-283–Gln-313 is disordered.

The protein belongs to the prokaryotic/mitochondrial release factor family. Methylated by PrmC. Methylation increases the termination efficiency of RF1.

It is found in the cytoplasm. Peptide chain release factor 1 directs the termination of translation in response to the peptide chain termination codons UAG and UAA. In Borreliella burgdorferi (strain ATCC 35210 / DSM 4680 / CIP 102532 / B31) (Borrelia burgdorferi), this protein is Peptide chain release factor 1 (prfA).